A 1495-amino-acid polypeptide reads, in one-letter code: ABC transporter C family member 12 (1495 aa).

The next 11 membrane-spanning stretches (helical) occupy residues 38–58, 76–96, 110–130, 146–166, 173–195, 303–323, 337–357, 420–440, 441–461, 528–548, and 558–578; these read VMLV…WIIF, VLGL…VMGI, FEVA…VLIG, FGVL…LPLK, ALYL…LIYI, FWLA…GPVI, AWVG…GVLC, GLWS…QQLG, VASL…TLII, FILN…FVLL, and FTSL…PNLL. The 281-residue stretch at 303–583 folds into the ABC transmembrane type-1 1 domain; sequence FWLAGIFKIG…LPNLLSQVVN (281 aa). One can recognise an ABC transporter 1 domain in the interval 615–839; that stretch reads ISIKNGYFSW…GILFKKLMEN (225 aa). 650–657 lines the ATP pocket; sequence GGTGEGKT. Helical transmembrane passes span 907–927, 949–969, 1042–1062, 1140–1160, and 1166–1186; these read AVGG…TEVL, PGFY…VTFT, FALI…LLIL, LETL…LQNG, and AGFA…TSLL. The 285-residue stretch at 914 to 1198 folds into the ABC transmembrane type-1 2 domain; that stretch reads VMILLACYLA…VLRQASRAEN (285 aa). The 235-residue stretch at 1235–1469 folds into the ABC transporter 2 domain; sequence IKFEDVHLRY…DTSAFFRMVH (235 aa). 1269-1276 contributes to the ATP binding site; that stretch reads GRTGAGKS.

The protein belongs to the ABC transporter superfamily. ABCC family. Conjugate transporter (TC 3.A.1.208) subfamily. In terms of tissue distribution, ubiquitous.

The protein resides in the membrane. It catalyses the reaction ATP + H2O + xenobioticSide 1 = ADP + phosphate + xenobioticSide 2.. In terms of biological role, pump for glutathione S-conjugates. The sequence is that of ABC transporter C family member 12 (ABCC12) from Arabidopsis thaliana (Mouse-ear cress).